Reading from the N-terminus, the 470-residue chain is Probable E3 ubiquitin-protein ligase TRIML1 (470 aa).

Residues 22–63 (CFICLDYFSSPVTTECGHSFCLMCLLKSWEEHNTPLSCPECW) form an RING-type zinc finger. Coiled-coil stretches lie at residues 135 to 170 (SEAE…KERV) and 196 to 235 (KEEE…GKMI). The region spanning 273–470 (TELSLCHITG…NTDPLIICHI (198 aa)) is the B30.2/SPRY domain.

In terms of assembly, interacts with USP5. As to expression, testis.

The enzyme catalyses S-ubiquitinyl-[E2 ubiquitin-conjugating enzyme]-L-cysteine + [acceptor protein]-L-lysine = [E2 ubiquitin-conjugating enzyme]-L-cysteine + N(6)-ubiquitinyl-[acceptor protein]-L-lysine.. It functions in the pathway protein modification; protein ubiquitination. Its function is as follows. Probable E3 ubiquitin-protein ligase which plays an important role in blastocyst development. Involved in progression of blastocyst stage and subsequent embryo development. The protein is Probable E3 ubiquitin-protein ligase TRIML1 (Triml1) of Mus musculus (Mouse).